The following is a 909-amino-acid chain: Yellow mounds protein A (909 aa).

The MIF4G domain occupies 7 to 283 (LNVVSRILNK…KNLFELKNNK (277 aa)). 5 disordered regions span residues 178 to 232 (SMGG…NNNI), 415 to 439 (MESS…SGIK), 460 to 537 (INLP…SSAP), 627 to 689 (VPPV…SEAR), and 704 to 774 (SLSG…AKKH). Acidic residues predominate over residues 204–215 (DDDDHDEEDNEN). Composition is skewed to low complexity over residues 216–231 (NYEN…NNNN) and 417–436 (SSSN…SSSS). Residues 473–490 (RSNSPSLSSVVKQPQSQQ) show a composition bias toward polar residues. Residues 491–525 (NNNNNNNNNNNNTTITTTTSSNNNINNNNNNNNNN) show a composition bias toward low complexity. The span at 721–738 (STPTLKSTPAIVQNGGSI) shows a compositional bias: polar residues. Residues 739–756 (TSTSSSSSSSSSSSSSTT) show a composition bias toward low complexity. A coiled-coil region spans residues 845 to 877 (TMLFDLEEMAQEQQNLEKQNDQQQNLLTQNNQI).

Plays as essential role in regulating terminal differentiation. This chain is Yellow mounds protein A (yelA), found in Dictyostelium discoideum (Social amoeba).